We begin with the raw amino-acid sequence, 496 residues long: Fibronectin type III and SPRY domain-containing protein 1 (496 aa).

Positions Q4 to E99 form a coiled coil. One can recognise a COS domain in the interval L105 to L162. Positions V164–F268 constitute a Fibronectin type-III domain. The region spanning F268–S477 is the B30.2/SPRY domain. Positions K301–D336 are disordered. R310 and R320 each carry omega-N-methylarginine.

Oligomerization is required for binding to microtubules.

The protein localises to the cytoplasm. It is found in the cytoskeleton. The protein resides in the microtubule organizing center. Its subcellular location is the centrosome. It localises to the nucleus. The protein localises to the cleavage furrow. Its function is as follows. May be involved in microtubule organization and stabilization. This is Fibronectin type III and SPRY domain-containing protein 1 (FSD1) from Bos taurus (Bovine).